A 207-amino-acid chain; its full sequence is Large ribosomal subunit protein uL4 (207 aa).

The disordered stretch occupies residues 49–73 (AKKRGEVSGGGKKPWKQKGGGRARA).

It belongs to the universal ribosomal protein uL4 family. Part of the 50S ribosomal subunit.

Functionally, one of the primary rRNA binding proteins, this protein initially binds near the 5'-end of the 23S rRNA. It is important during the early stages of 50S assembly. It makes multiple contacts with different domains of the 23S rRNA in the assembled 50S subunit and ribosome. Its function is as follows. Forms part of the polypeptide exit tunnel. The chain is Large ribosomal subunit protein uL4 from Helicobacter hepaticus (strain ATCC 51449 / 3B1).